Consider the following 89-residue polypeptide: Small ribosomal subunit protein uS15 (89 aa).

Belongs to the universal ribosomal protein uS15 family. In terms of assembly, part of the 30S ribosomal subunit. Forms a bridge to the 50S subunit in the 70S ribosome, contacting the 23S rRNA.

Its function is as follows. One of the primary rRNA binding proteins, it binds directly to 16S rRNA where it helps nucleate assembly of the platform of the 30S subunit by binding and bridging several RNA helices of the 16S rRNA. In terms of biological role, forms an intersubunit bridge (bridge B4) with the 23S rRNA of the 50S subunit in the ribosome. This is Small ribosomal subunit protein uS15 from Methylococcus capsulatus (strain ATCC 33009 / NCIMB 11132 / Bath).